Here is a 41-residue protein sequence, read N- to C-terminus: Large ribosomal subunit protein bL36 (41 aa).

The protein belongs to the bacterial ribosomal protein bL36 family.

The protein is Large ribosomal subunit protein bL36 of Orientia tsutsugamushi (strain Boryong) (Rickettsia tsutsugamushi).